The primary structure comprises 40 residues: Muscarinic m1-toxin4 (40 aa).

Cys3 and Cys24 are disulfide-bonded.

Belongs to the three-finger toxin family. Short-chain subfamily. Aminergic toxin sub-subfamily. As to quaternary structure, monomer. In terms of processing, contains 4 disulfide bonds. As to expression, expressed by the venom gland.

The protein localises to the secreted. Its function is as follows. Binds irreversibly and specifically to M1 (CHRM1) muscarinic acetylcholine receptors, blocking further binding of antagonists and preventing the action of agonists. This chain is Muscarinic m1-toxin4, found in Dendroaspis angusticeps (Eastern green mamba).